A 107-amino-acid polypeptide reads, in one-letter code: Putative double-stranded DNA mimic protein YE2228 (107 aa).

The protein belongs to the putative dsDNA mimic protein family.

May act as a double-stranded DNA (dsDNA) mimic. Probably regulates the activity of a dsDNA-binding protein. The polypeptide is Putative double-stranded DNA mimic protein YE2228 (Yersinia enterocolitica serotype O:8 / biotype 1B (strain NCTC 13174 / 8081)).